A 444-amino-acid chain; its full sequence is Phosphoglucosamine mutase (444 aa).

Serine 101 functions as the Phosphoserine intermediate in the catalytic mechanism. Positions 101, 239, 241, and 243 each coordinate Mg(2+). The residue at position 101 (serine 101) is a Phosphoserine.

It belongs to the phosphohexose mutase family. It depends on Mg(2+) as a cofactor. Activated by phosphorylation.

The enzyme catalyses alpha-D-glucosamine 1-phosphate = D-glucosamine 6-phosphate. Catalyzes the conversion of glucosamine-6-phosphate to glucosamine-1-phosphate. The sequence is that of Phosphoglucosamine mutase from Alcanivorax borkumensis (strain ATCC 700651 / DSM 11573 / NCIMB 13689 / SK2).